Reading from the N-terminus, the 887-residue chain is DNA mismatch repair protein MutS (887 aa).

626 to 633 (GPNMAGKS) lines the ATP pocket.

Belongs to the DNA mismatch repair MutS family.

Functionally, this protein is involved in the repair of mismatches in DNA. It is possible that it carries out the mismatch recognition step. This protein has a weak ATPase activity. The polypeptide is DNA mismatch repair protein MutS (Methanococcoides burtonii (strain DSM 6242 / NBRC 107633 / OCM 468 / ACE-M)).